The primary structure comprises 397 residues: Argininosuccinate synthase (397 aa).

Residues 9-17 (AFSGGLDTS) and Ala-35 each bind ATP. Positions 88 and 93 each coordinate L-citrulline. Gly-117 is an ATP binding site. L-aspartate contacts are provided by Thr-119, Asn-123, and Asp-124. L-citrulline is bound at residue Asn-123. Residue Arg-127 participates in L-citrulline binding.

The protein belongs to the argininosuccinate synthase family. Type 1 subfamily. As to quaternary structure, homotetramer.

The protein resides in the cytoplasm. The catalysed reaction is L-citrulline + L-aspartate + ATP = 2-(N(omega)-L-arginino)succinate + AMP + diphosphate + H(+). It functions in the pathway amino-acid biosynthesis; L-arginine biosynthesis; L-arginine from L-ornithine and carbamoyl phosphate: step 2/3. The chain is Argininosuccinate synthase from Xanthomonas campestris pv. campestris (strain ATCC 33913 / DSM 3586 / NCPPB 528 / LMG 568 / P 25).